The sequence spans 352 residues: MDDNKKKALAAALGQIERQFGKGAVMRMGDQDRQAIPAISTGSLGLDIALGIGGLPKGRIVEIYGPESSGKTTLTLSVIAQAQKAGATCAFVDAEHALDPEYAGKLGVNVDDLLVSQPDTGEQALEITDMLVRSNAVDVIIVDSVAALVPKAEIEGEMGDMHVGLQARLMSQALRKITGNIKNANCLVIFINQIRMKIGVMFGSPETTTGGNALKFYASVRLDIRRTGAVKEGDEVVGSETRVKVVKNKVASPFRQAEFQILYGKGIYLNGEMIDLGVLHGFVEKSGAWYAYEGTKIGQGKANSAKFLADNPEVAAKLEKQLRDKLLSPAVIADSKASAVKETEDDLADADI.

Position 65–72 (65–72 (GPESSGKT)) interacts with ATP.

It belongs to the RecA family.

It is found in the cytoplasm. Can catalyze the hydrolysis of ATP in the presence of single-stranded DNA, the ATP-dependent uptake of single-stranded DNA by duplex DNA, and the ATP-dependent hybridization of homologous single-stranded DNAs. It interacts with LexA causing its activation and leading to its autocatalytic cleavage. The chain is Protein RecA from Pseudomonas fluorescens (strain Pf0-1).